Here is a 330-residue protein sequence, read N- to C-terminus: MKKIAVDAMGGDYAPQAIVEGVNQALSDFSDIEVQLYGDEAKIKQYLTATERVSIIHTDEKIDSDDEPTRAIRNKKNASMVLAAKAVKDGEADAVLSAGNTGALLAAGFFIVGRIKNIDRPGLMSTLPTVDGKGFDMLDLGANAENTAQHLHQYAVLGSFYAKNVRGIAQPRVGLLNNGTESSKGDPLRKETYELLAADESLNFIGNVEARDLMNGVADVVVADGFTGNAVLKSIEGTAMGIMGLLKTAITGGGLRAKLGALLLKDSLSGLKKQLNYSDVGGAVLFGVKAPVVKTHGSSDAKAVYSTIRQIRTMLETDVVAQTAREFSGE.

Belongs to the PlsX family. In terms of assembly, homodimer. Probably interacts with PlsY.

Its subcellular location is the cytoplasm. The catalysed reaction is a fatty acyl-[ACP] + phosphate = an acyl phosphate + holo-[ACP]. It participates in lipid metabolism; phospholipid metabolism. In terms of biological role, catalyzes the reversible formation of acyl-phosphate (acyl-PO(4)) from acyl-[acyl-carrier-protein] (acyl-ACP). This enzyme utilizes acyl-ACP as fatty acyl donor, but not acyl-CoA. The sequence is that of Phosphate acyltransferase from Streptococcus pneumoniae (strain JJA).